The primary structure comprises 363 residues: Chemerin-like receptor 1 (363 aa).

Residues 1–39 (MDFEDYNSTYEDSYTDDFDTIVALEEFSPLEGRVVRIFL) lie on the Extracellular side of the membrane. Residue N7 is glycosylated (N-linked (GlcNAc...) asparagine). A helical membrane pass occupies residues 40–60 (VVVYSIICFLGILGNGLVIVI). The Cytoplasmic segment spans residues 61–71 (ATFKMKKTVNT). A helical transmembrane segment spans residues 72 to 92 (VWFLNLAVADFLFNVFLPIHI). Residues 93–109 (AYAAMDYHWVFGTAMCK) are Extracellular-facing. C108 and C185 are oxidised to a cystine. The helical transmembrane segment at 110-130 (ISNFLLIHNMYTSVFLLTVIS) threads the bilayer. Residues 131–152 (FDRCISVLLPVWSQNHRSIRLA) are Cytoplasmic-facing. Residues 153-173 (YMACVVIWVLAFFLSSPSLVF) form a helical membrane-spanning segment. Residues 174 to 220 (RDTAHLHGKISCFNNFSLSATSSSSWPTHPQMDTVGFGRQMVVTITR) lie on the Extracellular side of the membrane. N-linked (GlcNAc...) asparagine glycosylation is present at N188. The chain crosses the membrane as a helical span at residues 221 to 241 (FLCGFLVPVLIISACYFTIVY). Residues 242 to 256 (KLRRNRLAKTKKPFK) lie on the Cytoplasmic side of the membrane. A helical membrane pass occupies residues 257–277 (IIVTIIITFFLCWCPYHTLYL). The Extracellular segment spans residues 278 to 283 (LELHHR). Residues 284 to 304 (AMPGSVFSLGVPLATAIAIAN) traverse the membrane as a helical segment. The Cytoplasmic portion of the chain corresponds to 305–363 (SCMNPILYVFMGQDFKKFKVALFSRLVNALSEDTGHSSYPSHRSFTKMSSMNERETSML). A Phosphoserine modification is found at S335. Residues 337–363 (DTGHSSYPSHRSFTKMSSMNERETSML) are disordered. T338 is modified (phosphothreonine). Polar residues predominate over residues 340–355 (HSSYPSHRSFTKMSSM). Phosphoserine occurs at positions 345, 348, and 354.

This sequence belongs to the chemokine-like receptor (CMKLR) family. In terms of tissue distribution, predominantly expressed in spleen and temperately in adipose tissue.

Its subcellular location is the cell membrane. Functionally, receptor for the chemoattractant adipokine chemerin/RARRES2 and for the omega-3 fatty acid derived molecule resolvin E1. Interaction with RARRES2 initiates activation of G proteins G(i)/G(o) and beta-arrestin pathways inducing cellular responses via second messenger pathways such as intracellular calcium mobilization, phosphorylation of MAP kinases MAPK1/MAPK3 (ERK1/2), TYRO3, MAPK14/P38MAPK and PI3K leading to multifunctional effects, like, reduction of immune responses, enhancing of adipogenesis and angionesis. Resolvin E1 down-regulates cytokine production in macrophages by reducing the activation of MAPK1/3 (ERK1/2) and NF-kappa-B. Positively regulates adipogenesis and adipocyte metabolism. The chain is Chemerin-like receptor 1 (CMLKR1) from Sus scrofa (Pig).